The following is a 1357-amino-acid chain: DNA-directed RNA polymerase subunit beta (1357 aa).

The protein belongs to the RNA polymerase beta chain family. The RNAP catalytic core consists of 2 alpha, 1 beta, 1 beta' and 1 omega subunit. When a sigma factor is associated with the core the holoenzyme is formed, which can initiate transcription.

It catalyses the reaction RNA(n) + a ribonucleoside 5'-triphosphate = RNA(n+1) + diphosphate. In terms of biological role, DNA-dependent RNA polymerase catalyzes the transcription of DNA into RNA using the four ribonucleoside triphosphates as substrates. The protein is DNA-directed RNA polymerase subunit beta of Pseudomonas putida (strain GB-1).